Consider the following 231-residue polypeptide: NKG2-C type II integral membrane protein (231 aa).

A compositionally biased stretch (polar residues) spans 1-12 (MNKQRGTFSEVS). The interval 1–32 (MNKQRGTFSEVSLAQDPKRQQRKPKGNKSSIS) is disordered. Over 1–70 (MNKQRGTFSE…CQGLLPPPEK (70 aa)) the chain is Cytoplasmic. Residues 71–93 (LTAEVLGIICIVLMATVLKTIVL) form a helical; Signal-anchor for type II membrane protein membrane-spanning segment. The Extracellular segment spans residues 94–231 (IPFLEQNNFS…SMIYHCKHKL (138 aa)). The N-linked (GlcNAc...) asparagine glycan is linked to Asn-100. The C-type lectin domain occupies 116–229 (HCPEEWITYS…GSSMIYHCKH (114 aa)). Intrachain disulfides connect Cys-117–Cys-128, Cys-145–Cys-227, and Cys-206–Cys-219. Asn-149 and Asn-178 each carry an N-linked (GlcNAc...) asparagine glycan.

Heterodimer with KLRD1; disulfide-linked. KLRD1-KLRC2 receptor complex interacts with TYROBP homodimer; this interaction is necessary for the expression on the cell surface. KLRD1-KLRC2 receptor complex can bind with low affinity to HLA-E loaded with self-peptides derived from the signal sequence of classical MHC class Ia. As to expression, expressed in NK cell subsets, in particular in adaptive CD57-positive NK cells (at protein level). Expressed in terminally differentiated cytotoxic gamma-delta T cells (at protein level). Expressed in alpha-beta T cells subsets (at protein level). KLRD1-KLRC1 and KLRD1-KLRC2 are differentially expressed within NK and T cell populations, with only minor subsets expressing both receptor complexes (at protein level).

It is found in the cell membrane. Its function is as follows. Immune activating receptor involved in self-nonself discrimination. In complex with KLRD1 on cytotoxic lymphocyte subsets, recognizes non-classical major histocompatibility (MHC) class Ib HLA-E loaded with signal sequence-derived peptides from non-classical MHC class Ib HLA-G molecules, likely playing a role in the generation and effector functions of adaptive natural killer (NK) cells and in maternal-fetal tolerance during pregnancy. Regulates the effector functions of terminally differentiated cytotoxic lymphocyte subsets, and in particular may play a role in adaptive NK cell response to viral infection. Upon HLA-E-peptide binding, transmits intracellular signals via the adapter protein TYROBP/DAP12, triggering the phosphorylation of proximal signaling molecules and cell activation. The chain is NKG2-C type II integral membrane protein (KLRC2) from Homo sapiens (Human).